A 1035-amino-acid polypeptide reads, in one-letter code: NHS-like protein 3 (1035 aa).

Residue Val2 is the site of N-myristoyl glycine attachment. 3 disordered regions span residues 23–44 (KAENDKHLSVGPGQGPGSAVDE), 76–105 (QEKQKLNKGGWDHGDTQSIQSSRTGPDEDN), and 133–162 (IQRKGSTFRPHDSFPKSGKSGRRRRERRST). A compositionally biased stretch (basic and acidic residues) spans 76–90 (QEKQKLNKGGWDHGD). Phosphoserine occurs at positions 93, 138, 145, and 161. A Phosphothreonine modification is found at Thr162. At Ser215 the chain carries Phosphoserine. Arg320 carries the asymmetric dimethylarginine modification. Phosphoserine is present on residues Ser322, Ser327, Ser330, Ser338, Ser339, Ser341, and Ser342. 2 disordered regions span residues 332–869 (RSLG…APSS) and 885–1035 (SEGL…KELA). Over residues 338 to 365 (SSVSSPQPRSRHPSSSSDTWSHSQSSDT) the composition is skewed to low complexity. Polar residues predominate over residues 366–388 (IVSDGSTLSSKGGSEGQPESSTA). A phosphoserine mark is found at Ser400, Ser404, and Ser409. Residues 411 to 429 (AEASDTLSIRSSGQLSGRS) show a composition bias toward polar residues. Basic residues predominate over residues 431–449 (SLRKLKRPPPPPRRTHSLH). The span at 517–532 (RTLSPSSGYSSQSGTP) shows a compositional bias: low complexity. The residue at position 531 (Thr531) is a Phosphothreonine. A compositionally biased stretch (pro residues) spans 543–552 (PASPGKAQPP). Residue Ser545 is modified to Phosphoserine. The span at 562–589 (SPGASVSSSLTSLCSSSSDPAPSDRSGP) shows a compositional bias: low complexity. Phosphothreonine is present on Thr593. Positions 602–624 (PPHPKVPAPFSPPPSKPRSPNPA) are enriched in pro residues. The residue at position 612 (Ser612) is a Phosphoserine. 2 stretches are compositionally biased toward low complexity: residues 625 to 645 (APALAAPAVVPGPVSTTDASP) and 652 to 662 (QTTLTPLQESP). Phosphoserine is present on residues Ser669 and Ser673. Composition is skewed to pro residues over residues 669–685 (SPPPSPPPSYHPPPPPT) and 709–718 (NWPPPPPPAP). Low complexity predominate over residues 737–765 (SVASPEPAGPSGSPELVSSPAASSSSATA). The segment covering 771-784 (PGSPDPPPAPPAPA) has biased composition (pro residues). Positions 838–848 (GAPTPALGPSA) are enriched in low complexity. Phosphoserine is present on residues Ser858, Ser862, and Ser868. Pro residues predominate over residues 894–906 (NGPPEAEPRPPQS). A phosphoserine mark is found at Ser929, Ser959, Ser971, and Ser979. Residues 961 to 980 (KAPPPVARKPSVGVPPPASP) show a composition bias toward pro residues. Positions 999–1008 (TQDRTKRELA) are enriched in basic and acidic residues.

In terms of tissue distribution, expressed in lung.

Its function is as follows. Able to directly activate the TNF-NFkappaB signaling pathway. This chain is NHS-like protein 3, found in Homo sapiens (Human).